Here is a 191-residue protein sequence, read N- to C-terminus: Putative glutathione-dependent formaldehyde-activating enzyme (191 aa).

The 147-residue stretch at 20–166 (FAGGKLRCHC…FKALGLQTYD (147 aa)) folds into the CENP-V/GFA domain. The Zn(2+) site is built by C27, C29, C48, C50, C53, C95, and C98.

This sequence belongs to the Gfa family. Requires Zn(2+) as cofactor.

The catalysed reaction is S-(hydroxymethyl)glutathione = glutathione + formaldehyde. It participates in one-carbon metabolism; formaldehyde degradation; formate from formaldehyde (glutathione route): step 1/3. Functionally, catalyzes the condensation of formaldehyde and glutathione to S-hydroxymethylglutathione. This chain is Putative glutathione-dependent formaldehyde-activating enzyme, found in Penicillium rubens (strain ATCC 28089 / DSM 1075 / NRRL 1951 / Wisconsin 54-1255) (Penicillium chrysogenum).